The primary structure comprises 287 residues: Phosphatidylserine decarboxylase proenzyme (287 aa).

Residues Asp90, His147, and Ser252 each act as charge relay system; for autoendoproteolytic cleavage activity in the active site. The active-site Schiff-base intermediate with substrate; via pyruvic acid; for decarboxylase activity is Ser252. Residue Ser252 is modified to Pyruvic acid (Ser); by autocatalysis.

The protein belongs to the phosphatidylserine decarboxylase family. PSD-B subfamily. Prokaryotic type I sub-subfamily. In terms of assembly, heterodimer of a large membrane-associated beta subunit and a small pyruvoyl-containing alpha subunit. Pyruvate is required as a cofactor. Post-translationally, is synthesized initially as an inactive proenzyme. Formation of the active enzyme involves a self-maturation process in which the active site pyruvoyl group is generated from an internal serine residue via an autocatalytic post-translational modification. Two non-identical subunits are generated from the proenzyme in this reaction, and the pyruvate is formed at the N-terminus of the alpha chain, which is derived from the carboxyl end of the proenzyme. The autoendoproteolytic cleavage occurs by a canonical serine protease mechanism, in which the side chain hydroxyl group of the serine supplies its oxygen atom to form the C-terminus of the beta chain, while the remainder of the serine residue undergoes an oxidative deamination to produce ammonia and the pyruvoyl prosthetic group on the alpha chain. During this reaction, the Ser that is part of the protease active site of the proenzyme becomes the pyruvoyl prosthetic group, which constitutes an essential element of the active site of the mature decarboxylase.

The protein localises to the cell membrane. The enzyme catalyses a 1,2-diacyl-sn-glycero-3-phospho-L-serine + H(+) = a 1,2-diacyl-sn-glycero-3-phosphoethanolamine + CO2. The protein operates within phospholipid metabolism; phosphatidylethanolamine biosynthesis; phosphatidylethanolamine from CDP-diacylglycerol: step 2/2. Catalyzes the formation of phosphatidylethanolamine (PtdEtn) from phosphatidylserine (PtdSer). In Pseudomonas putida (strain ATCC 700007 / DSM 6899 / JCM 31910 / BCRC 17059 / LMG 24140 / F1), this protein is Phosphatidylserine decarboxylase proenzyme.